A 354-amino-acid chain; its full sequence is MTDTSVPTSTSPRLTSLSHGGGCGCKIAPGLLADLLKRSAPLPFFPDLLVGNDTADDAAVYKLNDEQAIVATTDFFMPIVDDPFDFGRIAATNALSDVYAMGGKPLMALAIVGMPINVLPHDVIAAVLKGGESVCAEAGIPLAGGHSIDSVEPIYGLVAIGVVDPKRVKRNAGAQAGDVLILGKPLGVGILSAALKKDRLDAAGYAAMIAATTKLNRPGAELSRLDGVHALTDITGFGLLGHTLELARGSNLTARVRYADLPWLPDVVGLAEAGIFTGASGRNWDAYGKSIGLPASLPATARTLLTDPQTSGGLLVSCAPQAVDEVLALFRADGFGEACVIGEMVSGEGRVEVV.

Cys23 is an active-site residue. ATP contacts are provided by residues Lys26 and 54 to 56 (TAD). Asp57 serves as a coordination point for Mg(2+). ATP-binding positions include Asp74, Asp97, and 145–147 (GHS). Position 97 (Asp97) interacts with Mg(2+). Mg(2+) is bound at residue Asp233.

This sequence belongs to the selenophosphate synthase 1 family. Class I subfamily. Homodimer. Mg(2+) serves as cofactor.

It catalyses the reaction hydrogenselenide + ATP + H2O = selenophosphate + AMP + phosphate + 2 H(+). Its function is as follows. Synthesizes selenophosphate from selenide and ATP. The sequence is that of Selenide, water dikinase from Paraburkholderia xenovorans (strain LB400).